The primary structure comprises 704 residues: Glycine--tRNA ligase beta subunit (704 aa).

The protein belongs to the class-II aminoacyl-tRNA synthetase family. As to quaternary structure, tetramer of two alpha and two beta subunits.

Its subcellular location is the cytoplasm. It carries out the reaction tRNA(Gly) + glycine + ATP = glycyl-tRNA(Gly) + AMP + diphosphate. The protein is Glycine--tRNA ligase beta subunit of Rhizobium etli (strain CIAT 652).